The chain runs to 210 residues: Fimbriae Z protein (210 aa).

The Response regulatory domain maps to 5–121 (SVIIMDTHPI…DIFHAVQMIL (117 aa)). Position 56 is a 4-aspartylphosphate (aspartate 56). One can recognise an HTH luxR-type domain in the interval 143–208 (NSSTVTVLSN…ELIDYAKLYE (66 aa)). Residues 167 to 186 (NKEIADKLLLSNKTVSAHKS) constitute a DNA-binding region (H-T-H motif).

Its subcellular location is the cytoplasm. The polypeptide is Fimbriae Z protein (fimZ) (Escherichia coli O157:H7).